The primary structure comprises 460 residues: Probable carboxylesterase 11 (460 aa).

2 stretches are compositionally biased toward polar residues: residues 26 to 35 (QSSGDESSSD) and 132 to 145 (NSYG…SPEA). Disordered stretches follow at residues 26 to 52 (QSSG…APNP) and 132 to 161 (NSYG…SSGG). The Involved in the stabilization of the negatively charged intermediate by the formation of the oxyanion hole motif lies at 173–175 (HGG). Residues serine 289, aspartate 392, and histidine 422 contribute to the active site.

Belongs to the 'GDXG' lipolytic enzyme family. Expressed in roots, leaves, stems, flowers and siliques.

It carries out the reaction a carboxylic ester + H2O = an alcohol + a carboxylate + H(+). Functionally, carboxylesterase acting on esters with varying acyl chain length. The chain is Probable carboxylesterase 11 (CXE11) from Arabidopsis thaliana (Mouse-ear cress).